A 232-amino-acid chain; its full sequence is Rhamnogalacturonan acetylesterase RhgT (232 aa).

Ser14 (nucleophile) is an active-site residue. Catalysis depends on residues Glu191 and His195.

This sequence belongs to the 'GDSL' lipolytic enzyme family. Monomer.

Almost completely inhibited by diethylpyrocarbonate at 5 mM and completely inhibited by phenylmethylsulfonyl fluoride (PMSF) at 50 mM. Dimethyl phosphite achieves only a 53% inhibition. Also inhibited by metal ions (magnesium, manganese and calcium) and chelating agent (EDTA) at the same level. In terms of biological role, may play a role in the degradation of type I rhamnogalacturonan derived from plant cell walls. This enzyme has a broad substrate specificity, and shows strong preference for glucose pentaacetate, beta-naphthylacetate, and p-nitrophenyl acetate (pNPA). Also active toward acetylated xylan. This is Rhamnogalacturonan acetylesterase RhgT (rhgT) from Bacillus subtilis (strain 168).